A 516-amino-acid polypeptide reads, in one-letter code: Tyrosine decarboxylase 3 (516 aa).

At lysine 319 the chain carries N6-(pyridoxal phosphate)lysine.

It belongs to the group II decarboxylase family. As to quaternary structure, homodimer. It depends on pyridoxal 5'-phosphate as a cofactor.

It carries out the reaction L-tyrosine + H(+) = tyramine + CO2. The chain is Tyrosine decarboxylase 3 (TYRDC-3) from Petroselinum crispum (Parsley).